We begin with the raw amino-acid sequence, 689 residues long: MFTMTRAMEEALFQHFMHQKLGIAYAIHKPFPFFEGLLDNSIITKRMYMESLEACRNLIPVSRVVHNILTQLERTFNLSLLVTLFSQINLREYPNLVTIYRSFKRVGASYEWQSRDTPILLEAPTGLAEGSSLHTPLALPPPQPPQPSCSPCAPRVSEPGTSSQQSDEILSESPSPSDPVLPLPALIQEGRSTSVTNDKLTSKMNAEEDSEEMPSLLTSTVQVASDNLIPQIRDKEDPQEMPHSPLGSMPEIRDNSPEPNDPEEPQEVSSTPSDKKGKKRKRCIWSTPKRRHKKKSLPGGTASSRHGIQKKLKRVDQVPQKKDDSTCNSTVETRAQKARTECARKSRSEEIIDGTSEMNEGKRSQKTPSTPRRVTQGAASPGHGIQEKLQVVDKVTQRKDDSTWNSEVMMRVQKARTKCARKSRLKEKKKEKDICSSSKRRFQKNIHRRGKPKSDTVDFHCSKLPVTCGEAKGILYKKKMKHGSSVKCIRNEDGTWLTPNEFEVEGKGRNAKNWKRNIRCEGMTLGELLKRKNSDECEVCCQGGQLLCCGTCPRVFHEDCHIPPVEAKRMLWSCTFCRMKRSSGSQQCHHVSKTLERQMQPQDQLIRDYGEPFQEAMWLDLVKERLITEMYTVAWFVRDMRLMFRNHKTFYKASDFGQVGLDLEAEFEKDLKDVLGFHEANDGGFWTLP.

The HSR domain maps to 1-108 (MFTMTRAMEE…IYRSFKRVGA (108 aa)). Disordered stretches follow at residues 131–216 (SSLH…MPSL) and 231–385 (QIRD…GHGI). Pro residues predominate over residues 138 to 148 (ALPPPQPPQPS). The span at 159-168 (PGTSSQQSDE) shows a compositional bias: polar residues. A phosphoserine mark is found at serine 175 and serine 177. Over residues 190 to 204 (GRSTSVTNDKLTSKM) the composition is skewed to polar residues. A phosphoserine mark is found at serine 244 and serine 256. Over residues 276-296 (KGKKRKRCIWSTPKRRHKKKS) the composition is skewed to basic residues. The Nuclear localization signal motif lies at 281–294 (KRCIWSTPKRRHKK). Basic and acidic residues-rich tracts occupy residues 314 to 325 (RVDQVPQKKDDS) and 334 to 350 (RAQK…RSEE). Serine 380 carries the post-translational modification Phosphoserine. The Nuclear localization signal signature appears at 428 to 444 (KKKEKDICSSSKRRFQK). The 82-residue stretch at 454-535 (SDTVDFHCSK…GELLKRKNSD (82 aa)) folds into the SAND domain. A nuclear hormone receptor interaction region spans residues 525 to 529 (LGELL). The PHD-type zinc-finger motif lies at 534–580 (SDECEVCCQGGQLLCCGTCPRVFHEDCHIPPVEAKRMLWSCTFCRMK). A Bromo domain is found at 583-674 (SGSQQCHHVS…AEFEKDLKDV (92 aa)).

(Microbial infection) Isoform 3 interacts with HCV core protein. Phosphorylated (isoform 2). In terms of tissue distribution, highly expressed in peripheral blood leukocytes and spleen. Detected at intermediate levels in thymus, prostate, testis, ovary, small intestine and colon, and at low levels in heart, brain, placenta, lung, liver, skeletal muscle, kidney and pancreas.

It localises to the nucleus. Functionally, transcription factor. May be a nuclear hormone receptor coactivator. Enhances transcription of genes with retinoic acid response elements (RARE). The chain is Sp110 nuclear body protein (SP110) from Homo sapiens (Human).